We begin with the raw amino-acid sequence, 259 residues long: uncharacterized protein (259 aa).

A signal peptide spans 1–22 (MKHSSKIIVFVSFLILTIFIGG). The N-palmitoyl cysteine moiety is linked to residue Cys23. Residue Cys23 is the site of S-diacylglycerol cysteine attachment.

Belongs to the staphylococcal tandem lipoprotein family.

The protein resides in the cell membrane. This is an uncharacterized protein from Staphylococcus epidermidis (strain ATCC 35984 / DSM 28319 / BCRC 17069 / CCUG 31568 / BM 3577 / RP62A).